We begin with the raw amino-acid sequence, 432 residues long: Keratin, type I cytoskeletal 17 (432 aa).

Residues 1-24 (MTTSIRQFTSSSSIKGSSGLGGGS) are disordered. Residues 1 to 83 (MTTSIRQFTS…GGVDGLLAGG (83 aa)) are head. 2 positions are modified to phosphoserine: Ser12 and Ser13. Lys15 is covalently cross-linked (Glycyl lysine isopeptide (Lys-Gly) (interchain with G-Cter in SUMO1); alternate). Lys15 is covalently cross-linked (Glycyl lysine isopeptide (Lys-Gly) (interchain with G-Cter in SUMO2); alternate). Ser25, Ser32, and Ser39 each carry phosphoserine. Ser44 is modified (phosphoserine; by RPS6KA1). The coil 1A stretch occupies residues 84-120 (EKATMQNLNDRLASYLDKVRALEEANTELEVKIRDWY). An IF rod domain is found at 84–395 (EKATMQNLND…RLLEGEDAHL (312 aa)). Residues 102–116 (VRALEEANTELEVKI) are peptide epitope S1; induces T-cell and keratinocyte proliferation and IFN-gamma production. At Thr110 the chain carries Phosphothreonine. The linker 1 stretch occupies residues 121-138 (QRQAPGPARDYSQYYRTI). The segment at 139 to 230 (EELQNKILTA…NHEEEMNALR (92 aa)) is coil 1B. Residues 153–167 (ANILLQIDNARLAAD) are peptide epitope S2; induces T-cell proliferation and IFN-gamma production. The interval 231–250 (GQVGGEINVEMDAAPGVDLS) is linker 12. The tract at residues 251-392 (RILNEMRDQY…TYRRLLEGED (142 aa)) is coil 2. Residue Lys278 forms a Glycyl lysine isopeptide (Lys-Gly) (interchain with G-Cter in SUMO2) linkage. Position 279 is a phosphothreonine (Thr279). Phosphoserine is present on Ser323. Residues 332-346 (ENRYCVQLSQIQGLI) are peptide epitope S4; induces T-cell and keratinocyte proliferation and IFN-gamma production. Residues 393-432 (AHLTQYKKEPVTTRQVRTIVEEVQDGKVISSREQVHQTTR) are tail. Residues Lys399, Lys400, and Lys419 each participate in a glycyl lysine isopeptide (Lys-Gly) (interchain with G-Cter in SUMO1); alternate cross-link. Glycyl lysine isopeptide (Lys-Gly) (interchain with G-Cter in SUMO2); alternate cross-links involve residues Lys399, Lys400, and Lys419.

Belongs to the intermediate filament family. As to quaternary structure, heterodimer of a type I and a type II keratin. KRT17 associates with KRT6 isomers (KRT6A or KRT6B). Interacts with TRADD and SFN. Phosphorylation at Ser-44 occurs in a growth- and stress-dependent fashion in skin keratinocytes, it has no effect on filament organization. In terms of tissue distribution, expressed in the outer root sheath and medulla region of hair follicle specifically from eyebrow and beard, digital pulp, nail matrix and nail bed epithelium, mucosal stratified squamous epithelia and in basal cells of oral epithelium, palmoplantar epidermis and sweat and mammary glands. Also expressed in myoepithelium of prostate, basal layer of urinary bladder, cambial cells of sebaceous gland and in exocervix (at protein level).

Its subcellular location is the cytoplasm. Type I keratin involved in the formation and maintenance of various skin appendages, specifically in determining shape and orientation of hair. Required for the correct growth of hair follicles, in particular for the persistence of the anagen (growth) state. Modulates the function of TNF-alpha in the specific context of hair cycling. Regulates protein synthesis and epithelial cell growth through binding to the adapter protein SFN and by stimulating Akt/mTOR pathway. Involved in tissue repair. May be a marker of basal cell differentiation in complex epithelia and therefore indicative of a certain type of epithelial 'stem cells'. Acts as a promoter of epithelial proliferation by acting a regulator of immune response in skin: promotes Th1/Th17-dominated immune environment contributing to the development of basaloid skin tumors. May act as an autoantigen in the immunopathogenesis of psoriasis, with certain peptide regions being a major target for autoreactive T-cells and hence causing their proliferation. This is Keratin, type I cytoskeletal 17 (KRT17) from Homo sapiens (Human).